The sequence spans 205 residues: Small ribosomal subunit protein uS4 (205 aa).

Residues 14–49 (RMGENIWGRPKSPVNRREYGPGQHGQRRKGKMSDFG) form a disordered region. One can recognise an S4 RNA-binding domain in the interval 94 to 157 (SRLDAIVYRA…KQLVTVLEAV (64 aa)).

This sequence belongs to the universal ribosomal protein uS4 family. Part of the 30S ribosomal subunit. Contacts protein S5. The interaction surface between S4 and S5 is involved in control of translational fidelity.

Its function is as follows. One of the primary rRNA binding proteins, it binds directly to 16S rRNA where it nucleates assembly of the body of the 30S subunit. Functionally, with S5 and S12 plays an important role in translational accuracy. This chain is Small ribosomal subunit protein uS4, found in Agrobacterium fabrum (strain C58 / ATCC 33970) (Agrobacterium tumefaciens (strain C58)).